The sequence spans 157 residues: Endoribonuclease YbeY (157 aa).

Zn(2+)-binding residues include histidine 114, histidine 118, and histidine 124.

This sequence belongs to the endoribonuclease YbeY family. The cofactor is Zn(2+).

Its subcellular location is the cytoplasm. Its function is as follows. Single strand-specific metallo-endoribonuclease involved in late-stage 70S ribosome quality control and in maturation of the 3' terminus of the 16S rRNA. The polypeptide is Endoribonuclease YbeY (Yersinia pestis).